Reading from the N-terminus, the 70-residue chain is Large ribosomal subunit protein bL31 (70 aa).

The Zn(2+) site is built by Cys-17, Cys-19, Cys-37, and Cys-40.

Belongs to the bacterial ribosomal protein bL31 family. Type A subfamily. As to quaternary structure, part of the 50S ribosomal subunit. Zn(2+) is required as a cofactor.

Its function is as follows. Binds the 23S rRNA. This Clostridium acetobutylicum (strain ATCC 824 / DSM 792 / JCM 1419 / IAM 19013 / LMG 5710 / NBRC 13948 / NRRL B-527 / VKM B-1787 / 2291 / W) protein is Large ribosomal subunit protein bL31.